A 343-amino-acid chain; its full sequence is Dihydroorotase (343 aa).

Zn(2+) contacts are provided by H14 and H16. Residues 16–18 and N42 each bind substrate; that span reads HLR. Zn(2+) contacts are provided by K97, H136, H170, and D242. Position 97 is an N6-carboxylysine (K97). H136 is a binding site for substrate. Residue D242 is part of the active site. Substrate contacts are provided by H246 and A258.

This sequence belongs to the metallo-dependent hydrolases superfamily. DHOase family. Class II DHOase subfamily. Homodimer. Zn(2+) is required as a cofactor.

It carries out the reaction (S)-dihydroorotate + H2O = N-carbamoyl-L-aspartate + H(+). The protein operates within pyrimidine metabolism; UMP biosynthesis via de novo pathway; (S)-dihydroorotate from bicarbonate: step 3/3. Functionally, catalyzes the reversible cyclization of carbamoyl aspartate to dihydroorotate. The sequence is that of Dihydroorotase from Helicobacter hepaticus (strain ATCC 51449 / 3B1).